Here is a 138-residue protein sequence, read N- to C-terminus: Cellular retinoic acid-binding protein 2 (138 aa).

The Nuclear localization signal signature appears at K21–K31. Residue K102 forms a Glycyl lysine isopeptide (Lys-Gly) (interchain with G-Cter in SUMO) linkage. Residue R133–Y135 participates in all-trans-retinoate binding.

It belongs to the calycin superfamily. Fatty-acid binding protein (FABP) family. Interacts with importin alpha, RXR and RARA. In terms of processing, sumoylated in response to retinoic acid binding, sumoylation is critical for dissociation from ER and subsequent nuclear translocation.

Its subcellular location is the cytoplasm. The protein resides in the endoplasmic reticulum. It localises to the nucleus. Its function is as follows. Transports retinoic acid to the nucleus. Regulates the access of retinoic acid to the nuclear retinoic acid receptors. This is Cellular retinoic acid-binding protein 2 (CRABP2) from Bos taurus (Bovine).